Here is a 128-residue protein sequence, read N- to C-terminus: Cytochrome c-type biogenesis protein CcmE (128 aa).

Topologically, residues 1–8 (MQKRVRNR) are cytoplasmic. Residues 9-29 (LITIIICFCSACLGISIILYN) form a helical; Signal-anchor for type II membrane protein membrane-spanning segment. At 30–128 (LEKNIVFFLP…KHDENYRPPQ (99 aa)) the chain is on the extracellular side. Residues histidine 120 and tyrosine 124 each contribute to the heme site.

It belongs to the CcmE/CycJ family.

It localises to the cell membrane. In terms of biological role, heme chaperone required for the biogenesis of c-type cytochromes. Transiently binds heme delivered by CcmC and transfers the heme to apo-cytochromes in a process facilitated by CcmF and CcmH. The chain is Cytochrome c-type biogenesis protein CcmE from Rickettsia africae (strain ESF-5).